The chain runs to 335 residues: Olfactory receptor 10R2 (335 aa).

The Extracellular portion of the chain corresponds to 1–45; the sequence is MPQILIFTYLNMFYFFPPLQILAENLTMVTEFLLLGFSSLGEIQL. N-linked (GlcNAc...) asparagine glycosylation occurs at Asn-25. The helical transmembrane segment at 46-66 threads the bilayer; it reads ALFVVFLFLYLVILSGNVTII. Residues 67 to 74 lie on the Cytoplasmic side of the membrane; the sequence is SVIHLDKS. The chain crosses the membrane as a helical span at residues 75–95; sequence LHTPMYFFLGILSTSETFYTF. Residues 96 to 119 lie on the Extracellular side of the membrane; that stretch reads VILPKMLINLLSVARTISFNCCAL. Residues Cys-117 and Cys-209 are joined by a disulfide bond. The helical transmembrane segment at 120-140 threads the bilayer; it reads QMFFFLGFAITNCLLLGVMGY. Residues 141–159 lie on the Cytoplasmic side of the membrane; it reads DRYAAICHPLHYPTLMSWQ. The chain crosses the membrane as a helical span at residues 160–180; the sequence is VCGKLAAACAIGGFLASLTVV. Residues 181-217 are Extracellular-facing; that stretch reads NLVFSLPFCSANKVNHYFCDISAVILLACTNTDVNEF. A helical transmembrane segment spans residues 218–237; that stretch reads VIFICGVLVLVVPFLFICVS. The Cytoplasmic segment spans residues 238 to 257; sequence YLCILRTILKIPSAEGRRKA. Residues 258-278 traverse the membrane as a helical segment; that stretch reads FSTCASHLSVVIVHYGCASFI. The Extracellular segment spans residues 279-291; it reads YLRPTANYVSNKD. The chain crosses the membrane as a helical span at residues 292 to 312; that stretch reads RLVTVTYTIVTPLLNPMVYSL. The Cytoplasmic segment spans residues 313-335; it reads RNKDVQLAIRKVLGKKGSLKLYN.

The protein belongs to the G-protein coupled receptor 1 family.

It is found in the cell membrane. Odorant receptor. The chain is Olfactory receptor 10R2 (OR10R2) from Homo sapiens (Human).